A 92-amino-acid chain; its full sequence is Small ribosomal subunit protein uS19 (92 aa).

The protein belongs to the universal ribosomal protein uS19 family.

Its function is as follows. Protein S19 forms a complex with S13 that binds strongly to the 16S ribosomal RNA. This Legionella pneumophila (strain Paris) protein is Small ribosomal subunit protein uS19.